The chain runs to 93 residues: Putative pterin-4-alpha-carbinolamine dehydratase (93 aa).

Belongs to the pterin-4-alpha-carbinolamine dehydratase family.

It carries out the reaction (4aS,6R)-4a-hydroxy-L-erythro-5,6,7,8-tetrahydrobiopterin = (6R)-L-erythro-6,7-dihydrobiopterin + H2O. In Thermomicrobium roseum (strain ATCC 27502 / DSM 5159 / P-2), this protein is Putative pterin-4-alpha-carbinolamine dehydratase.